A 60-amino-acid chain; its full sequence is Large ribosomal subunit protein uL30 (60 aa).

Belongs to the universal ribosomal protein uL30 family. Part of the 50S ribosomal subunit.

In Pediococcus pentosaceus (strain ATCC 25745 / CCUG 21536 / LMG 10740 / 183-1w), this protein is Large ribosomal subunit protein uL30.